Consider the following 282-residue polypeptide: 4-diphosphocytidyl-2-C-methyl-D-erythritol kinase (282 aa).

The active site involves Lys-9. 98–108 lines the ATP pocket; it reads PMGGGLGGGSS. Residue Asp-140 is part of the active site.

Belongs to the GHMP kinase family. IspE subfamily. In terms of assembly, homodimer.

It carries out the reaction 4-CDP-2-C-methyl-D-erythritol + ATP = 4-CDP-2-C-methyl-D-erythritol 2-phosphate + ADP + H(+). The protein operates within isoprenoid biosynthesis; isopentenyl diphosphate biosynthesis via DXP pathway; isopentenyl diphosphate from 1-deoxy-D-xylulose 5-phosphate: step 3/6. In terms of biological role, catalyzes the phosphorylation of the position 2 hydroxy group of 4-diphosphocytidyl-2C-methyl-D-erythritol. The chain is 4-diphosphocytidyl-2-C-methyl-D-erythritol kinase from Salmonella agona (strain SL483).